A 1493-amino-acid chain; its full sequence is Mediator of RNA polymerase II transcription subunit 14 (1493 aa).

6 disordered regions span residues 1 to 51 (MPSS…YHAA), 71 to 110 (MIGV…SAKG), 408 to 427 (TEQG…APTV), 674 to 693 (QRPR…RSAS), 894 to 913 (EAGT…NDVD), and 957 to 997 (GSNT…SSDD). The span at 90–100 (PDSKQSSDADG) shows a compositional bias: basic and acidic residues.

Belongs to the Mediator complex subunit 14 family. Component of the Mediator complex.

The protein localises to the nucleus. In terms of biological role, component of the Mediator complex, a coactivator involved in the regulated transcription of nearly all RNA polymerase II-dependent genes. Mediator functions as a bridge to convey information from gene-specific regulatory proteins to the basal RNA polymerase II transcription machinery. Mediator is recruited to promoters by direct interactions with regulatory proteins and serves as a scaffold for the assembly of a functional preinitiation complex with RNA polymerase II and the general transcription factors. This chain is Mediator of RNA polymerase II transcription subunit 14 (RGR1), found in Mycosarcoma maydis (Corn smut fungus).